A 321-amino-acid chain; its full sequence is L-carnitine dehydrogenase (321 aa).

NAD(+) is bound at residue 14 to 19 (GSGVIG).

It belongs to the 3-hydroxyacyl-CoA dehydrogenase family. L-carnitine dehydrogenase subfamily. As to quaternary structure, homodimer.

Its subcellular location is the cytoplasm. The catalysed reaction is carnitine + NAD(+) = 3-dehydrocarnitine + NADH + H(+). The protein operates within amine and polyamine metabolism; carnitine metabolism. In terms of biological role, catalyzes the NAD(+)-dependent oxidation of L-carnitine to 3-dehydrocarnitine. In Pseudomonas putida (strain ATCC 47054 / DSM 6125 / CFBP 8728 / NCIMB 11950 / KT2440), this protein is L-carnitine dehydrogenase.